Consider the following 343-residue polypeptide: Protein RecA (343 aa).

66–73 (GPESSGKT) contacts ATP.

This sequence belongs to the RecA family.

Its subcellular location is the cytoplasm. Can catalyze the hydrolysis of ATP in the presence of single-stranded DNA, the ATP-dependent uptake of single-stranded DNA by duplex DNA, and the ATP-dependent hybridization of homologous single-stranded DNAs. It interacts with LexA causing its activation and leading to its autocatalytic cleavage. The protein is Protein RecA of Nitrosomonas europaea (strain ATCC 19718 / CIP 103999 / KCTC 2705 / NBRC 14298).